The chain runs to 226 residues: 2-dehydro-3-deoxy-phosphogluconate aldolase (226 aa).

Catalysis depends on glutamate 57, which acts as the Proton acceptor. Pyruvate is bound by residues arginine 61, threonine 85, and lysine 145. Lysine 145 (schiff-base intermediate with substrate) is an active-site residue.

This sequence belongs to the KHG/KDPG aldolase family. Homotrimer.

It carries out the reaction 2-dehydro-3-deoxy-6-phospho-D-gluconate = D-glyceraldehyde 3-phosphate + pyruvate. Its pathway is carbohydrate acid metabolism; 2-dehydro-3-deoxy-D-gluconate degradation; D-glyceraldehyde 3-phosphate and pyruvate from 2-dehydro-3-deoxy-D-gluconate: step 2/2. Functionally, involved in the degradation of glucose via the Entner-Doudoroff pathway. Catalyzes the reversible, stereospecific retro-aldol cleavage of 2-keto-3-deoxy-6-phosphogluconate (KDPG) to pyruvate and D-glyceraldehyde-3-phosphate. This chain is 2-dehydro-3-deoxy-phosphogluconate aldolase, found in Pseudomonas putida (Arthrobacter siderocapsulatus).